Here is a 135-residue protein sequence, read N- to C-terminus: Nucleoside diphosphate kinase (135 aa).

ATP contacts are provided by K11, F59, R87, T93, R104, and N114. The active-site Pros-phosphohistidine intermediate is the H117.

This sequence belongs to the NDK family. As to quaternary structure, homotetramer. The cofactor is Mg(2+).

It localises to the cytoplasm. It catalyses the reaction a 2'-deoxyribonucleoside 5'-diphosphate + ATP = a 2'-deoxyribonucleoside 5'-triphosphate + ADP. The enzyme catalyses a ribonucleoside 5'-diphosphate + ATP = a ribonucleoside 5'-triphosphate + ADP. Major role in the synthesis of nucleoside triphosphates other than ATP. The ATP gamma phosphate is transferred to the NDP beta phosphate via a ping-pong mechanism, using a phosphorylated active-site intermediate. The sequence is that of Nucleoside diphosphate kinase from Marinomonas sp. (strain MWYL1).